The chain runs to 130 residues: Small ribosomal subunit protein uS8 (130 aa).

Belongs to the universal ribosomal protein uS8 family. As to quaternary structure, part of the 30S ribosomal subunit.

Functionally, one of the primary rRNA binding proteins, it binds directly to 16S rRNA central domain where it helps coordinate assembly of the platform of the 30S subunit. The polypeptide is Small ribosomal subunit protein uS8 (Nitrosopumilus maritimus (strain SCM1)).